The following is a 223-amino-acid chain: Lipoprotein-releasing system ATP-binding protein LolD (223 aa).

Residues 2 to 223 (IQVRNLKKTF…LRDGEIVTCA (222 aa)) form the ABC transporter domain. 38–45 (GVSGAGKT) contributes to the ATP binding site.

It belongs to the ABC transporter superfamily. Lipoprotein translocase (TC 3.A.1.125) family. The complex is composed of two ATP-binding proteins (LolD) and two transmembrane proteins (LolC and LolE).

The protein localises to the cell inner membrane. Functionally, part of the ABC transporter complex LolCDE involved in the translocation of mature outer membrane-directed lipoproteins, from the inner membrane to the periplasmic chaperone, LolA. Responsible for the formation of the LolA-lipoprotein complex in an ATP-dependent manner. The sequence is that of Lipoprotein-releasing system ATP-binding protein LolD from Syntrophus aciditrophicus (strain SB).